The chain runs to 197 residues: GCN5-related N-acetyltransferase 1, chloroplastic (197 aa).

The transit peptide at 1–37 (MFLGGTISTPPASLRLRSTLNPQNAVTQSSSQATFPA) directs the protein to the chloroplast. Residues 23 to 34 (QNAVTQSSSQAT) show a composition bias toward polar residues. Residues 23-46 (QNAVTQSSSQATFPAAMQRKPPSY) are disordered. In terms of domain architecture, N-acetyltransferase spans 58 to 195 (FLLRRTTEGL…GMVFIRKQRN (138 aa)). Acetyl-CoA contacts are provided by residues 129-131 (VVV), 137-142 (SCGLGK), 165-167 (EPR), and Tyr172. The active-site Proton donor is Tyr172.

This sequence belongs to the acetyltransferase family. GNAT subfamily. As to quaternary structure, oligomer. In terms of processing, autoacetylated. In terms of tissue distribution, expressed in green tissues. Accumulates mainly in flowers and young leaves, and, to a lower extent, in stems and mature leaves, but barely in roots.

The protein resides in the plastid. The protein localises to the chloroplast. It catalyses the reaction an N-terminal L-alpha-aminoacyl-[protein] + acetyl-CoA = N-terminal N(alpha)-acetyl-L-alpha-aminoacyl-[protein] + CoA + H(+). The enzyme catalyses L-lysyl-[protein] + acetyl-CoA = N(6)-acetyl-L-lysyl-[protein] + CoA + H(+). It carries out the reaction 5-methoxytryptamine + acetyl-CoA = melatonin + CoA + H(+). The catalysed reaction is serotonin + acetyl-CoA = N-acetylserotonin + CoA + H(+). Its activity is regulated as follows. Inhibited by 5-methoxytryptamine in vitro. Its function is as follows. Protein acetyltransferase with dual specificity triggering both N-alpha-acetylation (NTA) and epsilon-lysine acetylation (KA), possibly with a low efficiency or toward specific plastid substrates. Involved in melatonin biosynthesis by catalyzing the formation of N-acetylserotonin (NAS) from serotonin and of melatonin (N-acetyl-5-methoxytryptamine) from 5-methoxytryptamine (5-MT). In Arabidopsis thaliana (Mouse-ear cress), this protein is GCN5-related N-acetyltransferase 1, chloroplastic.